Reading from the N-terminus, the 609-residue chain is D-apionate lactonase (609 aa).

It carries out the reaction D-apionolactone + H2O = D-apionate + H(+). The protein operates within carbohydrate metabolism. Involved in catabolism of D-apiose. Hydrolyzes D-apionolactone to D-apionate. This is D-apionate lactonase from Brucella anthropi (strain ATCC 49188 / DSM 6882 / CCUG 24695 / JCM 21032 / LMG 3331 / NBRC 15819 / NCTC 12168 / Alc 37) (Ochrobactrum anthropi).